Consider the following 362-residue polypeptide: Probable dual-specificity RNA methyltransferase RlmN (362 aa).

Catalysis depends on glutamate 105, which acts as the Proton acceptor. The 234-residue stretch at 111-344 folds into the Radical SAM core domain; sequence HEYGNSICVT…VTIRREQGHD (234 aa). Cysteines 118 and 349 form a disulfide. Positions 125, 129, and 132 each coordinate [4Fe-4S] cluster. Residues 175–176, serine 207, 230–232, and asparagine 306 contribute to the S-adenosyl-L-methionine site; these read GE and SLH. Cysteine 349 serves as the catalytic S-methylcysteine intermediate.

Belongs to the radical SAM superfamily. RlmN family. [4Fe-4S] cluster serves as cofactor.

The protein resides in the cytoplasm. The enzyme catalyses adenosine(2503) in 23S rRNA + 2 reduced [2Fe-2S]-[ferredoxin] + 2 S-adenosyl-L-methionine = 2-methyladenosine(2503) in 23S rRNA + 5'-deoxyadenosine + L-methionine + 2 oxidized [2Fe-2S]-[ferredoxin] + S-adenosyl-L-homocysteine. It carries out the reaction adenosine(37) in tRNA + 2 reduced [2Fe-2S]-[ferredoxin] + 2 S-adenosyl-L-methionine = 2-methyladenosine(37) in tRNA + 5'-deoxyadenosine + L-methionine + 2 oxidized [2Fe-2S]-[ferredoxin] + S-adenosyl-L-homocysteine. Functionally, specifically methylates position 2 of adenine 2503 in 23S rRNA and position 2 of adenine 37 in tRNAs. In Bacillus anthracis (strain CDC 684 / NRRL 3495), this protein is Probable dual-specificity RNA methyltransferase RlmN.